The chain runs to 165 residues: V-type proton ATPase subunit c2 (165 aa).

Topologically, residues 1–12 (MASTFSGDETAP) are lumenal. The helical transmembrane segment at 13–33 (FFGFLGAAAALVFSCMGAAYG) threads the bilayer. The Cytoplasmic portion of the chain corresponds to 34–55 (TAKSGVGVASMGVMRPELVMKS). Residues 56–76 (IVPVVMAGVLGIYGLIIAVII) form a helical membrane-spanning segment. The Lumenal segment spans residues 77-95 (STGINPKAKSYYLFDGYAH). The helical transmembrane segment at 96–117 (LSSGLACGLAGLSAGMAIGIVG) threads the bilayer. Residues 118–129 (DAGVRANAQQPK) are Cytoplasmic-facing. The helical transmembrane segment at 130–155 (LFVGMILILIFAEALALYGLIVGIIL) threads the bilayer. Topologically, residues 156-165 (SSRAGQSRAE) are lumenal.

This sequence belongs to the V-ATPase proteolipid subunit family. In terms of assembly, V-ATPase is a heteromultimeric enzyme composed of a peripheral catalytic V1 complex (components A to H) attached to an integral membrane V0 proton pore complex (components: a, c, c'', d and e). The proteolipid components c and c'' are present as a hexameric ring that forms the proton-conducting pore. In terms of tissue distribution, expressed in leaf, root, flower and silique, with lower expression in roots.

It localises to the vacuole membrane. Its function is as follows. Proton-conducting pore forming subunit of the membrane integral V0 complex of vacuolar ATPase. V-ATPase is responsible for acidifying a variety of intracellular compartments in eukaryotic cells. This Arabidopsis thaliana (Mouse-ear cress) protein is V-type proton ATPase subunit c2 (VHA-c2).